Consider the following 215-residue polypeptide: 3-isopropylmalate dehydratase small subunit (215 aa).

Belongs to the LeuD family. LeuD type 1 subfamily. In terms of assembly, heterodimer of LeuC and LeuD.

It catalyses the reaction (2R,3S)-3-isopropylmalate = (2S)-2-isopropylmalate. It functions in the pathway amino-acid biosynthesis; L-leucine biosynthesis; L-leucine from 3-methyl-2-oxobutanoate: step 2/4. In terms of biological role, catalyzes the isomerization between 2-isopropylmalate and 3-isopropylmalate, via the formation of 2-isopropylmaleate. The protein is 3-isopropylmalate dehydratase small subunit of Teredinibacter turnerae (strain ATCC 39867 / T7901).